Here is a 167-residue protein sequence, read N- to C-terminus: Small ribosomal subunit protein uS5 (167 aa).

Residues 12–75 (LQEKLIAVNR…EKARRSMVTI (64 aa)) form the S5 DRBM domain.

Belongs to the universal ribosomal protein uS5 family. In terms of assembly, part of the 30S ribosomal subunit. Contacts proteins S4 and S8.

Functionally, with S4 and S12 plays an important role in translational accuracy. Located at the back of the 30S subunit body where it stabilizes the conformation of the head with respect to the body. The protein is Small ribosomal subunit protein uS5 of Vibrio cholerae serotype O1 (strain ATCC 39541 / Classical Ogawa 395 / O395).